Reading from the N-terminus, the 399-residue chain is Probable dual-specificity RNA methyltransferase RlmN (399 aa).

The Proton acceptor role is filled by Glu-97. Positions 103 to 381 constitute a Radical SAM core domain; sequence YPDRATVCVS…CTVRVERGVS (279 aa). Cys-110 and Cys-386 form a disulfide bridge. 3 residues coordinate [4Fe-4S] cluster: Cys-117, Cys-121, and Cys-124. S-adenosyl-L-methionine is bound by residues 203–204, Ser-235, 258–260, and Asn-343; these read GE and SLH. The S-methylcysteine intermediate role is filled by Cys-386.

The protein belongs to the radical SAM superfamily. RlmN family. The cofactor is [4Fe-4S] cluster.

Its subcellular location is the cytoplasm. The catalysed reaction is adenosine(2503) in 23S rRNA + 2 reduced [2Fe-2S]-[ferredoxin] + 2 S-adenosyl-L-methionine = 2-methyladenosine(2503) in 23S rRNA + 5'-deoxyadenosine + L-methionine + 2 oxidized [2Fe-2S]-[ferredoxin] + S-adenosyl-L-homocysteine. It catalyses the reaction adenosine(37) in tRNA + 2 reduced [2Fe-2S]-[ferredoxin] + 2 S-adenosyl-L-methionine = 2-methyladenosine(37) in tRNA + 5'-deoxyadenosine + L-methionine + 2 oxidized [2Fe-2S]-[ferredoxin] + S-adenosyl-L-homocysteine. Functionally, specifically methylates position 2 of adenine 2503 in 23S rRNA and position 2 of adenine 37 in tRNAs. This chain is Probable dual-specificity RNA methyltransferase RlmN, found in Roseiflexus sp. (strain RS-1).